A 161-amino-acid chain; its full sequence is Ribonuclease H (161 aa).

Residues 3 to 144 (GLKQISIYTD…CDDLARQAAE (142 aa)) enclose the RNase H type-1 domain. 4 residues coordinate Mg(2+): Asp12, Glu50, Asp72, and Asp136. A disordered region spans residues 133-161 (ERCDDLARQAAEAKPSQEDSGYINQQAQA). Positions 150–161 (EDSGYINQQAQA) are enriched in polar residues.

This sequence belongs to the RNase H family. In terms of assembly, monomer. Requires Mg(2+) as cofactor.

It localises to the cytoplasm. The catalysed reaction is Endonucleolytic cleavage to 5'-phosphomonoester.. Endonuclease that specifically degrades the RNA of RNA-DNA hybrids. The chain is Ribonuclease H from Shewanella halifaxensis (strain HAW-EB4).